We begin with the raw amino-acid sequence, 765 residues long: 5-methyltetrahydropteroyltriglutamate--homocysteine methyltransferase 1 (765 aa).

5-methyltetrahydropteroyltri-L-glutamate contacts are provided by K18 and N116. Position 437–439 (437–439 (IGS)) interacts with L-homocysteine. L-methionine-binding positions include 437–439 (IGS) and E490. 5-methyltetrahydropteroyltri-L-glutamate is bound by residues 521–522 (RC) and W567. D605 contacts L-homocysteine. L-methionine is bound at residue D605. Zn(2+)-binding residues include H647, C649, H658, D662, and E671. H701 acts as the Proton donor in catalysis. C733 contacts Zn(2+).

This sequence belongs to the vitamin-B12 independent methionine synthase family. Zn(2+) serves as cofactor. As to expression, expressed in leaves, stems, flowers, siliques and seeds.

The protein localises to the cytoplasm. It is found in the cytosol. The enzyme catalyses 5-methyltetrahydropteroyltri-L-glutamate + L-homocysteine = tetrahydropteroyltri-L-glutamate + L-methionine. It functions in the pathway amino-acid biosynthesis; L-methionine biosynthesis via de novo pathway; L-methionine from L-homocysteine (MetE route): step 1/1. Its function is as follows. Catalyzes the transfer of a methyl group from 5-methyltetrahydrofolate to homocysteine resulting in methionine formation. This Arabidopsis thaliana (Mouse-ear cress) protein is 5-methyltetrahydropteroyltriglutamate--homocysteine methyltransferase 1 (MS1).